The primary structure comprises 1639 residues: Merozoite surface protein 1 (1639 aa).

Positions 1 to 19 (MKIIFFLCSFLFFIINTQC) are cleaved as a signal peptide. 2 stretches are compositionally biased toward polar residues: residues 58-67 (SGTAVTTSTP) and 107-119 (NSRRTNPSDNSSD). Disordered regions lie at residues 58-78 (SGTAVTTSTPGSKGSVASGGS) and 94-122 (VASGGSVASGGSGNSRRTNPSDNSSDSDA). Asparagine 116 and asparagine 268 each carry an N-linked (GlcNAc...) asparagine glycan. The disordered stretch occupies residues 689–764 (KKNIKTEGQS…VPTPPAPVNN (76 aa)). Polar residues-rich tracts occupy residues 694–704 (TEGQSDNSEPS) and 711–722 (GQATTKPGQQAG). The span at 730 to 741 (VQAQAQEQKQAQ) shows a compositional bias: low complexity. N-linked (GlcNAc...) asparagine glycosylation is found at asparagine 764, asparagine 768, asparagine 783, and asparagine 844. The tract at residues 893–915 (SMQPLSLTPQDKPEVSANDDTSH) is disordered. N-linked (GlcNAc...) asparagine glycosylation is found at asparagine 920, asparagine 964, asparagine 1058, asparagine 1165, and asparagine 1174. Residues 1002 to 1116 (QLSFDLYNKY…EESIQTEDNY (115 aa)) form a required for binding to host erythrocyte cell membrane region. Residues 1199-1212 (VSESGSDTLEQSQP) show a composition bias toward polar residues. Residues 1199-1229 (VSESGSDTLEQSQPKKPASTHVGAESNTITT) form a disordered region. 2 N-linked (GlcNAc...) asparagine glycosylation sites follow: asparagine 1445 and asparagine 1526. EGF-like domains follow at residues 1530-1570 (HQCV…VENP) and 1571-1618 (NPTC…IFCS). 6 cysteine pairs are disulfide-bonded: cysteine 1532-cysteine 1543, cysteine 1537-cysteine 1553, cysteine 1555-cysteine 1566, cysteine 1574-cysteine 1587, cysteine 1581-cysteine 1601, and cysteine 1603-cysteine 1617. Residue serine 1618 is the site of GPI-anchor amidated serine attachment. Residues 1619–1639 (SSNFLGISFLLILMLILYSFI) constitute a propeptide, removed in mature form.

As to quaternary structure, forms a complex composed of subunits p83, p30, p38, and p42 which remain non-covalently associated; the complex is formed at the merozoite surface prior to egress from host erythrocytes. Forms a complex composed of processed MSP1 subunits, MSP6 subunit p36 and MSP7; the complex is formed at the merozoite surface prior to egress from host erythrocytes. Within the complex, interacts (via subunit p38) with MSP6 subunit p36 and (via subunits p83, p30 and p38) with MSP7 (via subunit p22). Forms a complex composed of MSP1, MSP6, DBLMSP1 and DBLMSP2. Within the complex, interacts (via subunit p38) with DBLMSP1 and DBLMSP2. Forms a complex composed of MSP1, and rhoptry proteins RhopH3, RAP1 and CLAG9/RhopH3. Within the complex, interacts (via subunits p42 and p19) with RhopH3 (via C-terminus). Forms a complex composed of MSP1, MSP6, MSP7, MSP9 and MSP3; within the complex, MSP6 and MSP9 mediate the binding to the host erythrocyte. Interacts (via subunits p19 and p42) with MSP9; the interaction is direct; MSP1 subunits p19 or p42, and MSP9 form a co-ligand complex that interacts with host SLC4A1/Band 3 protein. May interact with PFD6. Interacts with host spectrin. Interacts with host glycophorin GYPA in a sialic acid-independent manner. In terms of assembly, interacts with host proinflammatory cytokine S100P; the interaction blocks S100P inflammatory and chemotactic activities. As to quaternary structure, interacts with host SLC4A1/Band 3 (via 5ABC region) on the host erythrocyte surface in a sialic acid-independent manner. Post-translationally, the p190 precursor is cleaved by SUB1 prior to merozoite egress into 4 subunits p83, p30, p38, and p42 which remain non-covalently associated. SUB1-mediated proteolytic cleavage occurs in an orderly manner; the first cleavage occurs at the p83/p30 site, followed by cleavage at the p30/p38 site, the last cleavage occurs at the p38/p42 site. The order of cleavage is essential for parasite viability. SUB1-mediated processing is essential for merozoite egress. In a second processing step during erythrocyte invasion, p42 is cleaved by SUB2 into p33 and p19; the latter remains attached to the merozoite surface via its GPI-anchor and stays on the surface during the subsequent ring stage.

It localises to the cell membrane. The protein localises to the secreted. Its subcellular location is the vacuole membrane. Functionally, during the asexual blood stage, involved in merozoite egress from host erythrocytes possibly via its interaction with the host cytoskeleton protein spectrin resulting in the destabilization of the host cytoskeleton and thus leading to erythrocyte cell membrane rupture. Involved in the binding to host erythrocytes and is required for host erythrocyte invasion. Its function is as follows. By binding to host proinflammatory cytokine S100P may interfere with host immune responses. In terms of biological role, involved in merozoite invasion of host erythrocytes. May play a role in the biogenesis and/or function of the food vacuole during the intraerythrocytic development. The protein is Merozoite surface protein 1 of Plasmodium falciparum (isolate Wellcome).